The primary structure comprises 500 residues: Aspartyl/glutamyl-tRNA(Asn/Gln) amidotransferase subunit B (500 aa).

Belongs to the GatB/GatE family. GatB subfamily. Heterotrimer of A, B and C subunits.

It carries out the reaction L-glutamyl-tRNA(Gln) + L-glutamine + ATP + H2O = L-glutaminyl-tRNA(Gln) + L-glutamate + ADP + phosphate + H(+). It catalyses the reaction L-aspartyl-tRNA(Asn) + L-glutamine + ATP + H2O = L-asparaginyl-tRNA(Asn) + L-glutamate + ADP + phosphate + 2 H(+). In terms of biological role, allows the formation of correctly charged Asn-tRNA(Asn) or Gln-tRNA(Gln) through the transamidation of misacylated Asp-tRNA(Asn) or Glu-tRNA(Gln) in organisms which lack either or both of asparaginyl-tRNA or glutaminyl-tRNA synthetases. The reaction takes place in the presence of glutamine and ATP through an activated phospho-Asp-tRNA(Asn) or phospho-Glu-tRNA(Gln). This Brucella anthropi (strain ATCC 49188 / DSM 6882 / CCUG 24695 / JCM 21032 / LMG 3331 / NBRC 15819 / NCTC 12168 / Alc 37) (Ochrobactrum anthropi) protein is Aspartyl/glutamyl-tRNA(Asn/Gln) amidotransferase subunit B.